A 350-amino-acid polypeptide reads, in one-letter code: UDP-glucose 4-epimerase (350 aa).

NAD(+) is bound by residues 13–15, 34–38, 67–68, Phe-89, and Lys-93; these read GYI, DNLCN, and DI. Position 133–135 (133–135) interacts with substrate; the sequence is SAT. Tyr-158 acts as the Proton acceptor in catalysis. 2 residues coordinate NAD(+): Lys-162 and Tyr-186. Substrate contacts are provided by residues 186–188, 207–209, 225–227, Arg-240, and 303–306; these read YFN, NNL, SVY, and RSGD.

The protein belongs to the NAD(P)-dependent epimerase/dehydratase family. In terms of assembly, homodimer. NAD(+) is required as a cofactor.

The enzyme catalyses UDP-alpha-D-glucose = UDP-alpha-D-galactose. The catalysed reaction is UDP-N-acetyl-alpha-D-glucosamine = UDP-N-acetyl-alpha-D-galactosamine. It participates in carbohydrate metabolism; galactose metabolism. In terms of biological role, catalyzes two distinct but analogous reactions: the reversible epimerization of UDP-glucose to UDP-galactose and the reversible epimerization of UDP-N-acetylglucosamine to UDP-N-acetylgalactosamine. The reaction with UDP-Gal plays a critical role in the Leloir pathway of galactose catabolism in which galactose is converted to the glycolytic intermediate glucose 6-phosphate. It contributes to the catabolism of dietary galactose and enables the endogenous biosynthesis of both UDP-Gal and UDP-GalNAc when exogenous sources are limited. Both UDP-sugar interconversions are important in the synthesis of glycoproteins and glycolipids. The protein is UDP-glucose 4-epimerase (Gale) of Drosophila melanogaster (Fruit fly).